A 607-amino-acid chain; its full sequence is MWFAVVAIFLALVAFLYRYVVGSGPNPFAIDTREPLKPMVFDRKLKNKVLKQGFLASRVPEDLDAVVVGSGIGGLAIAVLLAKVGKKVLVLEQHDRAGGCCHTFKEQGFEFDVGIHYIGELSNHKPLRCIIDQMTNGQLQWDPLENPFDNVVIGPPENRRIYQIYSGRKRYMDELKKCFPGEEKAIDEYVRLCKEVGQGVWVMVLLKFLPTPIANFLVRTGLANRLTSFSRYASRSLTDVVNELTQNKDLRAVLSYIFGTYGKIPKEASFSMHSLIVNHYMNGAWYPKGGATEIAYHMIPIIEKAGGAVLVRAPVNRILLNDAKEAIGVSVLKGQEEVHVRAPIVISDAGIFNTYEYLLPKDVQTMPAIQKQLSMLQHGDSGLSIFIGLDGTKEELGLKADNYFIYPENNIDELLEDYRSGNREESAKKNPLIFVASPSAKDSTWPERTPGKSTLTVVSFANYEWFEEWKDDKVKNRSTDYKQLKELFINYILEAVTEIYPKIKDRIEYVDAGTPITNQHYIAAPRGEIYGADHGIPRFSAELNATIRAQTPIKNLYLTGQDLMLCGFAGALTGALTCGSVILNRNLHLEAFSLAKRVQNGNNKKKT.

A signal peptide spans 1-22; the sequence is MWFAVVAIFLALVAFLYRYVVG.

The protein belongs to the carotenoid/retinoid oxidoreductase family. CrtISO subfamily. NAD(+) serves as cofactor. Requires NADP(+) as cofactor. It depends on FAD as a cofactor.

It is found in the endoplasmic reticulum membrane. The catalysed reaction is all-trans-13,14-dihydroretinol + A = all-trans-retinol + AH2. Catalyzes the saturation of all-trans-retinol to all-trans-13,14-dihydroretinol. In addition, saturates the 7-8 double bond of all-trans-retinol to produce all-trans-7,8-dihydroretinol. Can also use vitamin A2 (all-trans-3,4-didehydroretinol) as a substrate, to produce all-trans-13,14-dihydro-3,4-didehydroretinol or all-trans-7,8-dihydro-3,4-didehydroretinol. May play a role in vitamin A metabolism. The polypeptide is All-trans-retinol 13,14-reductase (Danio rerio (Zebrafish)).